Here is a 112-residue protein sequence, read N- to C-terminus: Putative pterin-4-alpha-carbinolamine dehydratase (112 aa).

Belongs to the pterin-4-alpha-carbinolamine dehydratase family.

It carries out the reaction (4aS,6R)-4a-hydroxy-L-erythro-5,6,7,8-tetrahydrobiopterin = (6R)-L-erythro-6,7-dihydrobiopterin + H2O. In Photobacterium profundum (strain SS9), this protein is Putative pterin-4-alpha-carbinolamine dehydratase.